Here is a 263-residue protein sequence, read N- to C-terminus: 4-hydroxy-tetrahydrodipicolinate reductase (263 aa).

Residues 8–13 (GACGRM), aspartate 34, 99–101 (GTT), and 125–128 (SPNY) contribute to the NAD(+) site. Histidine 157 serves as the catalytic Proton donor/acceptor. Histidine 158 lines the (S)-2,3,4,5-tetrahydrodipicolinate pocket. The active-site Proton donor is the lysine 161. (S)-2,3,4,5-tetrahydrodipicolinate is bound at residue 167 to 168 (GT).

It belongs to the DapB family.

The protein localises to the cytoplasm. The catalysed reaction is (S)-2,3,4,5-tetrahydrodipicolinate + NAD(+) + H2O = (2S,4S)-4-hydroxy-2,3,4,5-tetrahydrodipicolinate + NADH + H(+). The enzyme catalyses (S)-2,3,4,5-tetrahydrodipicolinate + NADP(+) + H2O = (2S,4S)-4-hydroxy-2,3,4,5-tetrahydrodipicolinate + NADPH + H(+). Its pathway is amino-acid biosynthesis; L-lysine biosynthesis via DAP pathway; (S)-tetrahydrodipicolinate from L-aspartate: step 4/4. In terms of biological role, catalyzes the conversion of 4-hydroxy-tetrahydrodipicolinate (HTPA) to tetrahydrodipicolinate. The chain is 4-hydroxy-tetrahydrodipicolinate reductase from Methanosarcina acetivorans (strain ATCC 35395 / DSM 2834 / JCM 12185 / C2A).